We begin with the raw amino-acid sequence, 146 residues long: Putative esterase DR_2321 (146 aa).

It belongs to the thioesterase PaaI family.

The protein is Putative esterase DR_2321 of Deinococcus radiodurans (strain ATCC 13939 / DSM 20539 / JCM 16871 / CCUG 27074 / LMG 4051 / NBRC 15346 / NCIMB 9279 / VKM B-1422 / R1).